Here is a 1423-residue protein sequence, read N- to C-terminus: Guanine nucleotide exchange factor subunit RIC1 (1423 aa).

WD repeat units lie at residues 64–103 and 304–343; these read TQFG…GDKY and NKTG…LICT. The span at 437-448 shows a compositional bias: polar residues; the sequence is ASQTQNPRSSST. Positions 437–463 are disordered; it reads ASQTQNPRSSSTHSEHKPSREKSPFAD. Residues 449 to 460 are compositionally biased toward basic and acidic residues; sequence HSEHKPSREKSP. Phosphothreonine occurs at positions 992 and 996. 5 positions are modified to phosphoserine: S1015, S1017, S1019, S1037, and S1172. A disordered region spans residues 1355 to 1423; sequence PDAFQPITMG…QDGTYDCSVS (69 aa). Over residues 1379–1397 the composition is skewed to polar residues; it reads GSSSHGSIPQGEVGSSNMV. Residues 1404–1413 show a composition bias toward acidic residues; that stretch reads TAQAEEEEPF.

It belongs to the RIC1 family. In terms of assembly, forms a complex with RGP1; the interaction enhances RAB6A GTPase activity. Interacts (via central domain) with RGP1. Interacts with RAB6A; the interaction is direct with a preference for RAB6A-GDP. Interacts (via C-terminus domain) with RAB33B; the interaction is direct with a preference for RAB33B-GTP. Interacts with GJA1. Present in kidney and various cell lines (at protein level). Widely expressed at low level.

The protein localises to the cytoplasm. It localises to the cytosol. It is found in the membrane. The RIC1-RGP1 complex acts as a guanine nucleotide exchange factor (GEF), which activates RAB6A by exchanging bound GDP for free GTP, and may thereby be required for efficient fusion of endosome-derived vesicles with the Golgi compartment. The RIC1-RGP1 complex participates in the recycling of mannose-6-phosphate receptors. Required for phosphorylation and localization of GJA1. Is a regulator of procollagen transport and secretion, and is required for correct cartilage morphogenesis and development of the craniofacial skeleton. The chain is Guanine nucleotide exchange factor subunit RIC1 from Homo sapiens (Human).